The primary structure comprises 201 residues: Ran-specific GTPase-activating protein 1 (201 aa).

2 stretches are compositionally biased toward basic and acidic residues: residues 1 to 17 and 32 to 66; these read MSSE…EEAA and KKAE…IHFE. Positions 1–66 are disordered; that stretch reads MSSEDKKPVV…APESPDIHFE (66 aa). The residue at position 60 (serine 60) is a Phosphoserine. The RanBD1 domain occupies 64-200; sequence HFEPVVHLEK…FEKAQEINKK (137 aa).

It belongs to the RANBP1 family. In terms of assembly, interacts with GSP1 and PRP20.

Its subcellular location is the cytoplasm. The protein resides in the nucleus. Important for the export of protein containing nuclear export signal (NES) out of the nucleus. Stimulates the GTPase activity of GSP1 and GSP2. The polypeptide is Ran-specific GTPase-activating protein 1 (YRB1) (Saccharomyces cerevisiae (strain ATCC 204508 / S288c) (Baker's yeast)).